The following is a 316-amino-acid chain: MAETESCTFHVPSLEEICSILKSGLLKNFADVNVIVTECPDLTKEPFEFPVKGLCGKSRIADVGGVPYLVPMPRLDKVYNVNTVAKKIGLPGAYILGAGATSHRSLGMNAELIFSVQAESTSTLAVNKSYVASVNPGDGSCLLEKYRDRNNDNDFGLLSNLYACEGKPGKVIEVSVKRRIGQDNFVSCMRKSLKEHYGENAVGMGGTFLIKQGKAKLHVMPREYSACPLNTDEDVNGWLKFYDMTAPLICQSVFVSHDPGYDLRLEHTHCYSHHGEGGHYHYDTTPDTVEYLGYFHPAEFLYRIDKPSATHLVGRD.

3 residues coordinate Zn(2+): His267, His269, and His279.

As to quaternary structure, monomer. It depends on Zn(2+) as a cofactor.

The protein resides in the nucleus. The protein localises to the cytoplasm. Functionally, exhibits ester hydrolase activity on the substrate p-nitrophenyl acetate, in vitro. May regulate DNA damage and repair by regulating HIF1A degradation via chaperone-mediated autophagy (CMA). This Xenopus laevis (African clawed frog) protein is Ester hydrolase C11orf54 homolog.